Consider the following 512-residue polypeptide: Norfluorocurarine oxidase (512 aa).

The chain crosses the membrane as a helical span at residues 3 to 23 (LLLNPSLFSLLPLLLFIIFLF). Cys453 serves as a coordination point for heme.

This sequence belongs to the cytochrome P450 family. Heme is required as a cofactor.

The protein localises to the membrane. The catalysed reaction is norfluorocurarine + reduced [NADPH--hemoprotein reductase] + O2 = 18-hydroxynorfluorocurarine + oxidized [NADPH--hemoprotein reductase] + H2O + H(+). Its pathway is alkaloid biosynthesis. In terms of biological role, monooxygenase involved in the biosynthesis of curare monoterpene indole alkaloids (MIAs), natural products such as diaboline, a pharmacologically active compound used to regulate blood pressure. Curare alkaloids act as animal glycine receptor antagonists. Catalyzes the conversion of norfluorocurarine to 18-OH norfluorocurarine. In Strychnos sp, this protein is Norfluorocurarine oxidase.